The primary structure comprises 497 residues: Glucose-6-phosphate 1-dehydrogenase (497 aa).

NADP(+) contacts are provided by residues 15–22 (GASGDLSK), R49, and K153. D-glucose 6-phosphate contacts are provided by residues K153, 183–187 (HYLGK), E221, and D240. H245 acts as the Proton acceptor in catalysis. R336 serves as a coordination point for NADP(+). K339 serves as a coordination point for D-glucose 6-phosphate. NADP(+)-binding residues include K345, R349, and R371. Q373 contacts D-glucose 6-phosphate. NADP(+) is bound by residues 379 to 381 (YLK), 399 to 401 (DLT), and R466.

This sequence belongs to the glucose-6-phosphate dehydrogenase family.

It carries out the reaction D-glucose 6-phosphate + NADP(+) = 6-phospho-D-glucono-1,5-lactone + NADPH + H(+). Its pathway is carbohydrate degradation; pentose phosphate pathway; D-ribulose 5-phosphate from D-glucose 6-phosphate (oxidative stage): step 1/3. Functionally, catalyzes the rate-limiting step of the oxidative pentose-phosphate pathway, which represents a route for the dissimilation of carbohydrates besides glycolysis. The main function of this enzyme is to provide reducing power (NADPH) and pentose phosphates for fatty acid and nucleic acid synthesis. This Kluyveromyces lactis (strain ATCC 8585 / CBS 2359 / DSM 70799 / NBRC 1267 / NRRL Y-1140 / WM37) (Yeast) protein is Glucose-6-phosphate 1-dehydrogenase (ZWF).